We begin with the raw amino-acid sequence, 527 residues long: CTP synthase (527 aa).

Residues 1–270 (MKYIFVTGGV…ADVLCQLLQL (270 aa)) form an amidoligase domain region. Residue S12 coordinates CTP. S12 contacts UTP. Residues 13-18 (GLGKGI) and D70 contribute to the ATP site. The Mg(2+) site is built by D70 and E145. CTP contacts are provided by residues 152 to 154 (DIE), 191 to 196 (KTKPTQ), and K227. UTP is bound by residues 191–196 (KTKPTQ) and K227. Residues 292 to 525 (TIGIVSKYGK…VEACLKNRGK (234 aa)) enclose the Glutamine amidotransferase type-1 domain. G349 provides a ligand contact to L-glutamine. C376 (nucleophile; for glutamine hydrolysis) is an active-site residue. L-glutamine-binding positions include 377–380 (LGFQ), E400, and R455. Catalysis depends on residues H498 and E500.

This sequence belongs to the CTP synthase family. As to quaternary structure, homotetramer.

The catalysed reaction is UTP + L-glutamine + ATP + H2O = CTP + L-glutamate + ADP + phosphate + 2 H(+). It carries out the reaction L-glutamine + H2O = L-glutamate + NH4(+). The enzyme catalyses UTP + NH4(+) + ATP = CTP + ADP + phosphate + 2 H(+). The protein operates within pyrimidine metabolism; CTP biosynthesis via de novo pathway; CTP from UDP: step 2/2. Allosterically activated by GTP, when glutamine is the substrate; GTP has no effect on the reaction when ammonia is the substrate. The allosteric effector GTP functions by stabilizing the protein conformation that binds the tetrahedral intermediate(s) formed during glutamine hydrolysis. Inhibited by the product CTP, via allosteric rather than competitive inhibition. In terms of biological role, catalyzes the ATP-dependent amination of UTP to CTP with either L-glutamine or ammonia as the source of nitrogen. Regulates intracellular CTP levels through interactions with the four ribonucleotide triphosphates. In Methanospirillum hungatei JF-1 (strain ATCC 27890 / DSM 864 / NBRC 100397 / JF-1), this protein is CTP synthase.